Reading from the N-terminus, the 1724-residue chain is Protein scribble homolog (1724 aa).

The interval 1–821 (MLKCIPLWRC…MTVLRERMVE (821 aa)) is sufficient for targeting to adherens junction. 17 LRR repeats span residues 11-34 (NRHV…IYRY), 35-58 (NRSL…FFRL), 59-81 (HNLR…VANF), 83-105 (QLVE…KFCQ), 107-127 (LEIA…FTQL), 128-150 (RGLA…IGNL), 151-174 (SNLV…SFLV), 176-196 (LEQL…LGAL), 197-219 (PNLR…LGNL), 221-242 (QLVC…ISGL), 244-265 (ALTD…IGSL), 266-288 (KKLS…IGEC), 289-311 (ENLT…LGKL), 312-334 (KKLT…LGGC), 336-357 (SLNV…LANA), 359-380 (ELHV…LANL), and 382-405 (LKAM…DDEQ). 3 disordered regions span residues 451–484 (RDDS…LKVM), 496–620 (YTAR…RKDT), and 646–683 (SHDG…HTPF). Over residues 518 to 534 (SNQSHDSQASSSTTSAT) the composition is skewed to low complexity. Positions 554–567 (VQEEEDLDEMEVEY) are enriched in acidic residues. Residues 574-583 (FAEEPIIRGG) are compositionally biased toward basic and acidic residues. The span at 584 to 598 (DEDDDYDNDDDDAER) shows a compositional bias: acidic residues. The segment covering 611-620 (EKQRLIRKDT) has biased composition (basic and acidic residues). A compositionally biased stretch (acidic residues) spans 661–678 (RDGEDDEEEEEDEDEEDD). PDZ domains lie at 731–818 (TLSI…LRER), 867–955 (ATCL…DREQ), 1005–1094 (EVTL…RRDP), and 1101–1193 (EIVI…CDGF). Residues 955-995 (QSSVGGASPRTRPHSPPPPEPSDSPEQEDGGDEHLGNHLNC) are disordered. Disordered stretches follow at residues 1283–1407 (LQKV…DRQK), 1414–1433 (KQQT…EDDL), 1449–1468 (REFM…AKQV), and 1488–1555 (SLGS…GESA). A compositionally biased stretch (basic and acidic residues) spans 1295–1306 (FRIDSPVRDAAH). 3 stretches are compositionally biased toward polar residues: residues 1308–1329 (PHNS…NAST), 1346–1357 (PASQDGHSSPNP), and 1364–1385 (PINS…KQPS). Residues 1395–1407 (HSPEQRSFKDRQK) show a composition bias toward basic and acidic residues. Residues 1430-1461 (EDDLKKMKEEEAKRIEQRAREFMLDEDEEEEE) are a coiled coil. The span at 1453–1463 (LDEDEEEEEED) shows a compositional bias: acidic residues. Polar residues predominate over residues 1490-1506 (GSPTSRQCATPPNYSAT). Residues 1507–1518 (PPSHCGSSGPSS) show a composition bias toward low complexity. Basic and acidic residues predominate over residues 1521–1538 (GKGDSQRNSVEDSFRLEQ). Residue Ser-1609 is modified to Phosphoserine. A disordered region spans residues 1621–1684 (IAKSKEGKKR…FMDESSSNAV (64 aa)). The span at 1623–1632 (KSKEGKKRGT) shows a compositional bias: basic and acidic residues.

Palmitoylated.

It localises to the cell membrane. Its subcellular location is the cell junction. The protein resides in the adherens junction. The protein localises to the cell projection. It is found in the lamellipodium. It localises to the cytoplasm. Its subcellular location is the postsynapse. The protein resides in the presynapse. Functionally, scaffold protein involved in different aspects of polarized cells differentiation regulating epithelial and neuronal morphogenesis. Regulates the caudal migration of the nVII motor neurons. Required for convergent extension movements during gastrulation. This is Protein scribble homolog (scrib) from Danio rerio (Zebrafish).